The following is a 528-amino-acid chain: Tyrosine--tRNA ligase, cytoplasmic (528 aa).

Residue methionine 1 is modified to N-acetylmethionine. An N-acetylglycine; in Tyrosine--tRNA ligase, cytoplasmic, N-terminally processed modification is found at glycine 2. Tyrosine 39 provides a ligand contact to L-tyrosine. Tyrosine 39 lines the trans-resveratrol pocket. The 'HIGH' region motif lies at 44-52 (TTGKPHVAY). L-tyrosine is bound by residues tyrosine 166, glutamine 170, aspartate 173, and glutamine 188. Positions 170 and 173 each coordinate trans-resveratrol. Residue lysine 197 is modified to N6-acetyllysine. Phosphoserine is present on serine 205. At lysine 206 the chain carries N6-acetyllysine. Positions 222–226 (KMSSS) match the 'KMSKS' region motif. The Nuclear localization signal signature appears at 242–247 (KKKLKK). A disordered region spans residues 339–363 (AAYPDPSKQKPTAKGPAKSSEPEEI). The tRNA-binding domain maps to 364 to 468 (IPSRLDIRVG…AGSAPGERVF (105 aa)). Serine 386 bears the Phosphoserine mark. N6-acetyllysine is present on residues lysine 474, lysine 482, and lysine 490.

This sequence belongs to the class-I aminoacyl-tRNA synthetase family. Homodimer. Interacts (when binding to resveratrol) with PARP1; interaction stimulates the poly-ADP-ribosyltransferase activity of PARP1.

The protein resides in the cytoplasm. Its subcellular location is the nucleus. The enzyme catalyses tRNA(Tyr) + L-tyrosine + ATP = L-tyrosyl-tRNA(Tyr) + AMP + diphosphate + H(+). With respect to regulation, resveratrol strongly inhibits the tyrosine--tRNA ligase activity. Its function is as follows. Tyrosine--tRNA ligase that catalyzes the attachment of tyrosine to tRNA(Tyr) in a two-step reaction: tyrosine is first activated by ATP to form Tyr-AMP and then transferred to the acceptor end of tRNA(Tyr). Also acts as a positive regulator of poly-ADP-ribosylation in the nucleus, independently of its tyrosine--tRNA ligase activity. Activity is switched upon resveratrol-binding: resveratrol strongly inhibits the tyrosine--tRNA ligase activity and promotes relocalization to the nucleus, where YARS1 specifically stimulates the poly-ADP-ribosyltransferase activity of PARP1. This chain is Tyrosine--tRNA ligase, cytoplasmic (Yars1), found in Rattus norvegicus (Rat).